Consider the following 551-residue polypeptide: Glucose-6-phosphate isomerase 2 (551 aa).

Glu-353 acts as the Proton donor in catalysis. Catalysis depends on residues His-384 and Lys-512.

It belongs to the GPI family.

The protein resides in the cytoplasm. The enzyme catalyses alpha-D-glucose 6-phosphate = beta-D-fructose 6-phosphate. It participates in carbohydrate biosynthesis; gluconeogenesis. Its pathway is carbohydrate degradation; glycolysis; D-glyceraldehyde 3-phosphate and glycerone phosphate from D-glucose: step 2/4. In terms of biological role, catalyzes the reversible isomerization of glucose-6-phosphate to fructose-6-phosphate. The protein is Glucose-6-phosphate isomerase 2 of Colwellia psychrerythraea (strain 34H / ATCC BAA-681) (Vibrio psychroerythus).